We begin with the raw amino-acid sequence, 124 residues long: Cytochrome c2 (124 aa).

Gln-1 carries the pyrrolidone carboxylic acid modification. Residues Cys-15, Cys-18, His-19, and Met-100 each contribute to the heme c site.

In terms of processing, binds 1 heme c group covalently per subunit.

The protein resides in the periplasm. Functionally, cytochrome c2 is found mainly in purple, non-sulfur, photosynthetic bacteria where it functions as the electron donor to the oxidized bacteriochlorophyll in the photophosphorylation pathway. However, it may also have a role in the respiratory chain and is found in some non-photosynthetic bacteria. The sequence is that of Cytochrome c2 (cycA) from Cereibacter sphaeroides (Rhodobacter sphaeroides).